A 329-amino-acid chain; its full sequence is Glycerol-3-phosphate dehydrogenase [NAD(P)+] (329 aa).

Residues Trp11 and Lys101 each contribute to the NADPH site. Positions 101, 132, and 134 each coordinate sn-glycerol 3-phosphate. Ala136 contributes to the NADPH binding site. Sn-glycerol 3-phosphate contacts are provided by Lys188, Asp241, Ser251, Arg252, and Asn253. Lys188 serves as the catalytic Proton acceptor. Arg252 contacts NADPH. Glu278 is a binding site for NADPH.

The protein belongs to the NAD-dependent glycerol-3-phosphate dehydrogenase family.

It is found in the cytoplasm. It catalyses the reaction sn-glycerol 3-phosphate + NAD(+) = dihydroxyacetone phosphate + NADH + H(+). The enzyme catalyses sn-glycerol 3-phosphate + NADP(+) = dihydroxyacetone phosphate + NADPH + H(+). It participates in membrane lipid metabolism; glycerophospholipid metabolism. In terms of biological role, catalyzes the reduction of the glycolytic intermediate dihydroxyacetone phosphate (DHAP) to sn-glycerol 3-phosphate (G3P), the key precursor for phospholipid synthesis. In Onion yellows phytoplasma (strain OY-M), this protein is Glycerol-3-phosphate dehydrogenase [NAD(P)+].